The primary structure comprises 65 residues: Large ribosomal subunit protein uL29 (65 aa).

It belongs to the universal ribosomal protein uL29 family.

This is Large ribosomal subunit protein uL29 from Buchnera aphidicola subsp. Acyrthosiphon pisum (strain 5A).